Consider the following 368-residue polypeptide: Histidinol dehydrogenase (368 aa).

3 residues coordinate substrate: T197, Q218, and H221. 2 residues coordinate Zn(2+): Q218 and H221. Active-site proton acceptor residues include E276 and H277. Residues H277, D306, E358, and H363 each coordinate substrate. D306 is a binding site for Zn(2+). Residue H363 coordinates Zn(2+).

It belongs to the histidinol dehydrogenase family. Zn(2+) serves as cofactor.

The enzyme catalyses L-histidinol + 2 NAD(+) + H2O = L-histidine + 2 NADH + 3 H(+). The protein operates within amino-acid biosynthesis; L-histidine biosynthesis; L-histidine from 5-phospho-alpha-D-ribose 1-diphosphate: step 9/9. In terms of biological role, catalyzes the sequential NAD-dependent oxidations of L-histidinol to L-histidinaldehyde and then to L-histidine. This chain is Histidinol dehydrogenase, found in Pyrobaculum aerophilum (strain ATCC 51768 / DSM 7523 / JCM 9630 / CIP 104966 / NBRC 100827 / IM2).